Reading from the N-terminus, the 173-residue chain is MAARGRRAEPPGREAPGPAGSGRSRWAESGPGTSPESGDDEVSGSSPVSSGVNLFANDGSFLELFKRKMEEEQRQRQEEPPPGPQRPDPPASAAAGPGNPKRKGGPGPTLSFVGKRRGGNKLALKTGIVAKKQKTEDEVLTSKGDAWAKYMAEVKKYKAHQCGDDDKTRPLVK.

The segment covering 1–12 (MAARGRRAEPPG) has biased composition (basic and acidic residues). Positions 1–119 (MAARGRRAEP…LSFVGKRRGG (119 aa)) are disordered. Composition is skewed to low complexity over residues 14–23 (EAPGPAGSGR) and 43–52 (SGSSPVSSGV). The segment covering 64-79 (LFKRKMEEEQRQRQEE) has biased composition (basic and acidic residues). Residues 80–90 (PPPGPQRPDPP) are compositionally biased toward pro residues. Position 143 is an N6-acetyllysine (Lys-143).

In terms of assembly, part of the telomerase RNA 3' end complex which contains about 488 proteins.

Functionally, exoribonuclease that is part of the telomerase RNA 3' end processing complex and which has the ability to cleave all four unpaired RNA nucleotides from the 5' end or 3' end with higher efficiency for purine bases. In Mus musculus (Mouse), this protein is Telomerase RNA component interacting RNase.